The primary structure comprises 222 residues: Large ribosomal subunit protein bL20 (222 aa).

The protein belongs to the bacterial ribosomal protein bL20 family.

Binds directly to 23S ribosomal RNA and is necessary for the in vitro assembly process of the 50S ribosomal subunit. It is not involved in the protein synthesizing functions of that subunit. The chain is Large ribosomal subunit protein bL20 (rplT) from Paenarthrobacter aurescens (strain TC1).